The chain runs to 387 residues: Transmembrane protein 120 homolog (387 aa).

Residues 1–39 are a coiled coil; the sequence is MNIDSLKNEWEELNKEFAELESCNRRYIELLEQLHSHQQ. The N-linked (GlcNAc...) asparagine glycan is linked to Asn111. The next 6 helical transmembrane spans lie at 130 to 150, 155 to 175, 191 to 211, 216 to 238, 264 to 284, and 302 to 322; these read FKLI…IFNY, LAFI…ESIL, FIST…HWQI, FMYF…KGLL, GLSF…YNAW, and VMSG…LWVV. The segment at 346 to 387 is disordered; sequence RKEMKNSASDLDLSSGSKLSPTATTTTSIATATQTPAEKKET. Residues Ser352, Ser354, and Ser365 each carry the phosphoserine modification. Residues 352–381 show a composition bias toward low complexity; it reads SASDLDLSSGSKLSPTATTTTSIATATQTP.

Belongs to the TMEM120 family.

The protein resides in the membrane. This chain is Transmembrane protein 120 homolog, found in Drosophila melanogaster (Fruit fly).